We begin with the raw amino-acid sequence, 380 residues long: Chaperone protein DnaJ (380 aa).

The region spanning 5–70 (DFYDVLGVNR…QKRAAYDQYG (66 aa)) is the J domain. The segment at 139-217 (GCEKQIRIPT…CHGAGRVKSQ (79 aa)) adopts a CR-type zinc-finger fold. Residues Cys152, Cys155, Cys169, Cys172, Cys191, Cys194, Cys205, and Cys208 each contribute to the Zn(2+) site. CXXCXGXG motif repeat units lie at residues 152–159 (CSHCHGSG), 169–176 (CPTCGGAG), 191–198 (CPTCHGSG), and 205–212 (CNICHGAG).

It belongs to the DnaJ family. In terms of assembly, homodimer. Zn(2+) serves as cofactor.

The protein localises to the cytoplasm. Participates actively in the response to hyperosmotic and heat shock by preventing the aggregation of stress-denatured proteins and by disaggregating proteins, also in an autonomous, DnaK-independent fashion. Unfolded proteins bind initially to DnaJ; upon interaction with the DnaJ-bound protein, DnaK hydrolyzes its bound ATP, resulting in the formation of a stable complex. GrpE releases ADP from DnaK; ATP binding to DnaK triggers the release of the substrate protein, thus completing the reaction cycle. Several rounds of ATP-dependent interactions between DnaJ, DnaK and GrpE are required for fully efficient folding. Also involved, together with DnaK and GrpE, in the DNA replication of plasmids through activation of initiation proteins. The chain is Chaperone protein DnaJ from Laribacter hongkongensis (strain HLHK9).